We begin with the raw amino-acid sequence, 187 residues long: MAGESFILMGVSGSGKTLIGSKVAALLSAKFIDGDDLHPAKNIDKMSQGIPLSDEDRLPWLERLNDASYSLYKKNETGFIVCSSLKKQYRDILRKGSPHVHFLWLDGDYETILARMQRRAGHFMPVALLKSQFEALERPQADEQDIVRIDINHDIANVTEQCRQAVLAIRQNRICAKEGSASDQRCE.

10–17 (GVSGSGKT) is an ATP binding site.

It belongs to the gluconokinase GntK/GntV family.

It catalyses the reaction D-gluconate + ATP = 6-phospho-D-gluconate + ADP + H(+). Its pathway is carbohydrate acid metabolism; L-idonate degradation. The sequence is that of Thermosensitive gluconokinase (idnK) from Escherichia coli (strain K12).